A 367-amino-acid chain; its full sequence is tRNA-specific 2-thiouridylase MnmA (367 aa).

Residues 7–14 (AMSGGVDS) and Met33 each bind ATP. Cys108 serves as the catalytic Nucleophile. The cysteines at positions 108 and 200 are disulfide-linked. Position 132 (Gly132) interacts with ATP. Residues 150-152 (KDQ) are interaction with tRNA. The Cysteine persulfide intermediate role is filled by Cys200. The segment at 301–302 (RY) is interaction with tRNA.

Belongs to the MnmA/TRMU family.

It localises to the cytoplasm. The enzyme catalyses S-sulfanyl-L-cysteinyl-[protein] + uridine(34) in tRNA + AH2 + ATP = 2-thiouridine(34) in tRNA + L-cysteinyl-[protein] + A + AMP + diphosphate + H(+). Catalyzes the 2-thiolation of uridine at the wobble position (U34) of tRNA, leading to the formation of s(2)U34. This is tRNA-specific 2-thiouridylase MnmA from Thermus thermophilus (strain ATCC BAA-163 / DSM 7039 / HB27).